A 605-amino-acid polypeptide reads, in one-letter code: uncharacterized protein (605 aa).

The interval 22-93 (FTEPARFYPS…KQGTAVHGAE (72 aa)) is disordered. A compositionally biased stretch (low complexity) spans 46–57 (SENASSSVPSHS).

This is an uncharacterized protein from Treponema pallidum (strain Nichols).